Consider the following 353-residue polypeptide: DNA polymerase IV (353 aa).

Residues 14-198 (IIHIDMDAFF…MDISKFHGVG (185 aa)) form the UmuC domain. Positions 18 and 116 each coordinate Mg(2+). Glutamate 117 is an active-site residue.

This sequence belongs to the DNA polymerase type-Y family. Monomer. It depends on Mg(2+) as a cofactor.

It is found in the cytoplasm. It catalyses the reaction DNA(n) + a 2'-deoxyribonucleoside 5'-triphosphate = DNA(n+1) + diphosphate. Its function is as follows. Poorly processive, error-prone DNA polymerase involved in untargeted mutagenesis. Copies undamaged DNA at stalled replication forks, which arise in vivo from mismatched or misaligned primer ends. These misaligned primers can be extended by PolIV. Exhibits no 3'-5' exonuclease (proofreading) activity. May be involved in translesional synthesis, in conjunction with the beta clamp from PolIII. This chain is DNA polymerase IV, found in Streptococcus pneumoniae serotype 2 (strain D39 / NCTC 7466).